The primary structure comprises 612 residues: Chaperone protein DnaK (612 aa).

T174 carries the post-translational modification Phosphothreonine; by autocatalysis. The interval 578–612 is disordered; the sequence is GGQTGGATNTDSAGQGTTQDNVYEANYKVEDDDNK. The span at 586–598 shows a compositional bias: polar residues; sequence NTDSAGQGTTQDN.

Belongs to the heat shock protein 70 family.

Functionally, acts as a chaperone. This Thermoanaerobacter sp. (strain X514) protein is Chaperone protein DnaK.